The following is a 118-amino-acid chain: uncharacterized protein (118 aa).

This is an uncharacterized protein from Bacillus subtilis (strain 168).